Consider the following 288-residue polypeptide: MRIRVPATSANLGPGFDSCGLALTLYLTLDIGGEAETWYIEHDIGGGIPHDETNVIIETALHLAPNLTPHHLVMTCDIPPARGLGSSSAAVVAGIELANTLAELNLSKEEKVRIAAEIEGHPDNVAPAVLGNWVVGAKLDGEDFYVRHLFPDCALIAFIPKKELLTSESRGVLPDALPFKEAVQASSIANVMIAAILRNDMTLAGEMMERDLWHEKYRSKLVPHLTQIREVAKSKGAYAACLSGAGPTVLVFAPRNIANTLQASLQTLEIDADVLLLDIEGSGAEVFY.

79-89 lines the ATP pocket; sequence PPARGLGSSSA.

This sequence belongs to the GHMP kinase family. Homoserine kinase subfamily.

The protein localises to the cytoplasm. It carries out the reaction L-homoserine + ATP = O-phospho-L-homoserine + ADP + H(+). Its pathway is amino-acid biosynthesis; L-threonine biosynthesis; L-threonine from L-aspartate: step 4/5. Catalyzes the ATP-dependent phosphorylation of L-homoserine to L-homoserine phosphate. The polypeptide is Homoserine kinase (Listeria welshimeri serovar 6b (strain ATCC 35897 / DSM 20650 / CCUG 15529 / CIP 8149 / NCTC 11857 / SLCC 5334 / V8)).